The sequence spans 409 residues: Argininosuccinate synthase (409 aa).

Ala-10–Ser-18 provides a ligand contact to ATP. An L-citrulline-binding site is contributed by Tyr-87. Residue Gly-117 participates in ATP binding. L-aspartate-binding residues include Thr-119, Asn-123, and Asp-124. Asn-123 is an L-citrulline binding site. Residues Arg-127, Ser-175, Ser-184, Glu-260, and Tyr-272 each coordinate L-citrulline.

It belongs to the argininosuccinate synthase family. Type 1 subfamily. Homotetramer.

Its subcellular location is the cytoplasm. The catalysed reaction is L-citrulline + L-aspartate + ATP = 2-(N(omega)-L-arginino)succinate + AMP + diphosphate + H(+). It functions in the pathway amino-acid biosynthesis; L-arginine biosynthesis; L-arginine from L-ornithine and carbamoyl phosphate: step 2/3. The polypeptide is Argininosuccinate synthase (Rubrobacter xylanophilus (strain DSM 9941 / JCM 11954 / NBRC 16129 / PRD-1)).